We begin with the raw amino-acid sequence, 366 residues long: Putative type II methyltransferase M.MjaORF1200P (366 aa).

One can recognise an SAM-dependent MTase C5-type domain in the interval 5–366 (LKFIDLFCGC…IARVIKENLK (362 aa)). Residue Cys133 is part of the active site.

Belongs to the class I-like SAM-binding methyltransferase superfamily. C5-methyltransferase family.

It catalyses the reaction a 2'-deoxycytidine in DNA + S-adenosyl-L-methionine = a 5-methyl-2'-deoxycytidine in DNA + S-adenosyl-L-homocysteine + H(+). In terms of biological role, a putative methylase that probably protects DNA from cleavage by the MjaORF1200P endonuclease. The polypeptide is Putative type II methyltransferase M.MjaORF1200P (Methanocaldococcus jannaschii (strain ATCC 43067 / DSM 2661 / JAL-1 / JCM 10045 / NBRC 100440) (Methanococcus jannaschii)).